The chain runs to 838 residues: Rho GTPase-activating protein 12 (838 aa).

Residues 10–72 (AGQAYIEVEY…PAQYVKEVTR (63 aa)) enclose the SH3 domain. 2 stretches are compositionally biased toward polar residues: residues 155–172 (GKFN…QNRT) and 189–198 (TSFSQEQSCD). The interval 155–239 (GKFNSDSHSP…PPNQGRPDSP (85 aa)) is disordered. Ser163 is modified (phosphoserine). Phosphoserine is present on residues Ser199, Ser211, and Ser213. Phosphothreonine is present on residues Thr228 and Thr229. Ser238 is subject to Phosphoserine. At Tyr241 the chain carries Phosphotyrosine. Positions 263-296 (IQVNGEWETHKDSSGRCYYYNRTTQERTWKPPRW) constitute a WW 1 domain. Residues 291–302 (WKPPRWARDVST) are compositionally biased toward basic and acidic residues. The tract at residues 291–346 (WKPPRWARDVSTSRDFQSPGEQEPLSSEENYHSSCFSQSDSQCGSPPRGWSEELDE) is disordered. Polar residues predominate over residues 303–334 (SRDFQSPGEQEPLSSEENYHSSCFSQSDSQCG). Positions 355–388 (DYTKEKWLKHVDDQGRQYYYSADGSRSEWELPKY) constitute a WW 2 domain. The interval 425-456 (DSNDKDSPTTTKLCLPENESPPTSSKHQDPGQ) is disordered. One can recognise a PH domain in the interval 466–567 (KITENGKKVR…WFKVLSSTIN (102 aa)). The segment covering 572–582 (EADEAAEEETP) has biased composition (acidic residues). A disordered region spans residues 572 to 620 (EADEAAEEETPDSPGVEKHDKEKDQKELKKLRSMKGSSMDSSEQKKTKK). Phosphoserine is present on Ser584. Residues 586-601 (GVEKHDKEKDQKELKK) show a composition bias toward basic and acidic residues. Positions 648–836 (SNLANLCQRE…LILLELSTVF (189 aa)) constitute a Rho-GAP domain.

In terms of biological role, GTPase activator for the Rho-type GTPases by converting them to an inactive GDP-bound state. The protein is Rho GTPase-activating protein 12 (Arhgap12) of Mus musculus (Mouse).